The chain runs to 244 residues: Probable transcriptional regulatory protein CHY_1525 (244 aa).

Belongs to the TACO1 family.

The protein localises to the cytoplasm. In Carboxydothermus hydrogenoformans (strain ATCC BAA-161 / DSM 6008 / Z-2901), this protein is Probable transcriptional regulatory protein CHY_1525.